The following is a 96-amino-acid chain: RING finger protein Z (96 aa).

A compositionally biased stretch (basic and acidic residues) spans 1 to 10 (MGNCRSKQES). Residues 1–21 (MGNCRSKQESHPICPNTQTPE) form a disordered region. Glycine 2 carries the N-myristoyl glycine; by host lipid modification. The segment at 41–77 (CKCCWFADRNLINCSDHYLCLRCLNVMLRTSNLCNIC) adopts an RING-type; atypical zinc-finger fold. A PTAP/PSAP motif motif is present at residues 91–94 (PTAP).

This sequence belongs to the arenaviridae Z protein family. In terms of assembly, interacts with protein NP; this interaction probably directs the encapsidated genome to budding sites. Interacts (via RING domain) with polymerase L; this interaction inhibits viral transcription and replication, Z partially blocks the product exit tunnel for the releasing nascent RNA product. Interacts with the glycoprotein complex; this interaction plays a role in virion budding. Interacts with host eIF4E; this interaction results in eIF4E reduced affinity for its substrate, the 5'-m7 G cap structure. Interacts (via late-budding domain) with host TSG101; this interaction is essential for budding and release of viral particles. Interacts with host RPLP0; this interaction may serve to load ribosome-like particles inside the virion. Interacts with host PML; this interaction induces PML bodies redistribution in the cytoplasm upon viral infection. Post-translationally, myristoylation is required for the role of RING finger protein Z in assembly and budding.

It localises to the virion. Its subcellular location is the host cytoplasm. It is found in the host perinuclear region. The protein localises to the host cell membrane. Plays a crucial role in virion assembly and budding. Expressed late in the virus life cycle, it acts as an inhibitor of viral transcription and RNA synthesis by interacting with the viral polymerase L. Presumably recruits the NP encapsidated genome to cellular membranes at budding sites via direct interaction with NP. Plays critical roles in the final steps of viral release by interacting with host TSG101, a member of the vacuolar protein-sorting pathway and using other cellular host proteins involved in vesicle formation pathway. The budding of the virus progeny occurs after association of protein Z with the viral glycoprotein complex SSP-GP1-GP2 at the cell periphery, step that requires myristoylation of protein Z. Also selectively represses protein production by associating with host eIF4E. In cell-based minigenome assay, has an inhibitory effect on the ribonucleoprotein machinery (vRNP), which is responsible for the replication and transcription of the viral genome. This Hylaeamys megacephalus (Large-headed rice rat) protein is RING finger protein Z.